The sequence spans 142 residues: Hemoglobin subunit alpha (142 aa).

One can recognise a Globin domain in the interval 2–142 (VLSPADKTNV…VSTVLTSKYR (141 aa)). S4 is subject to Phosphoserine. At K8 the chain carries N6-succinyllysine. A Phosphothreonine modification is found at T9. Position 12 is an N6-succinyllysine (K12). An N6-acetyllysine; alternate modification is found at K17. K17 is modified (N6-succinyllysine; alternate). Y25 is subject to Phosphotyrosine. S36 carries the post-translational modification Phosphoserine. K41 bears the N6-succinyllysine mark. S50 is subject to Phosphoserine. H59 is a binding site for O2. Heme b is bound at residue H88. A Phosphoserine modification is found at S103. At T109 the chain carries Phosphothreonine. S125 carries the phosphoserine modification. A phosphothreonine mark is found at T135 and T138. At S139 the chain carries Phosphoserine.

This sequence belongs to the globin family. In terms of assembly, heterotetramer of two alpha chains and two beta chains. In terms of tissue distribution, red blood cells.

Involved in oxygen transport from the lung to the various peripheral tissues. In terms of biological role, hemopressin acts as an antagonist peptide of the cannabinoid receptor CNR1. Hemopressin-binding efficiently blocks cannabinoid receptor CNR1 and subsequent signaling. This chain is Hemoglobin subunit alpha (HBA), found in Ailurus fulgens (Himalayan red panda).